The following is a 449-amino-acid chain: CCA-adding enzyme (449 aa).

Residues Ser-53 and Lys-56 each coordinate ATP. Positions 53 and 56 each coordinate CTP. Mg(2+)-binding residues include Asp-65, Asp-67, and Asp-119. The ATP site is built by His-142, Lys-161, and Tyr-170. CTP-binding residues include His-142, Lys-161, and Tyr-170.

The protein belongs to the tRNA nucleotidyltransferase/poly(A) polymerase family. Archaeal CCA-adding enzyme subfamily. As to quaternary structure, homodimer. Mg(2+) is required as a cofactor.

It carries out the reaction a tRNA precursor + 2 CTP + ATP = a tRNA with a 3' CCA end + 3 diphosphate. It catalyses the reaction a tRNA with a 3' CCA end + 2 CTP + ATP = a tRNA with a 3' CCACCA end + 3 diphosphate. Catalyzes the addition and repair of the essential 3'-terminal CCA sequence in tRNAs without using a nucleic acid template. Adds these three nucleotides in the order of C, C, and A to the tRNA nucleotide-73, using CTP and ATP as substrates and producing inorganic pyrophosphate. tRNA 3'-terminal CCA addition is required both for tRNA processing and repair. Also involved in tRNA surveillance by mediating tandem CCA addition to generate a CCACCA at the 3' terminus of unstable tRNAs. While stable tRNAs receive only 3'-terminal CCA, unstable tRNAs are marked with CCACCA and rapidly degraded. In Pyrococcus horikoshii (strain ATCC 700860 / DSM 12428 / JCM 9974 / NBRC 100139 / OT-3), this protein is CCA-adding enzyme.